The chain runs to 155 residues: Small ribosomal subunit protein uS7c (155 aa).

The protein belongs to the universal ribosomal protein uS7 family. As to quaternary structure, part of the 30S ribosomal subunit.

Its subcellular location is the plastid. The protein localises to the chloroplast. One of the primary rRNA binding proteins, it binds directly to 16S rRNA where it nucleates assembly of the head domain of the 30S subunit. This chain is Small ribosomal subunit protein uS7c (rps7), found in Stewartia pseudocamellia (Japanese stewartia).